A 396-amino-acid chain; its full sequence is DNA-directed RNA polymerase subunit 6 (396 aa).

Disordered stretches follow at residues 1 to 137 and 290 to 396; these read MSSK…DIED and NQQK…DYSE. 3 stretches are compositionally biased toward acidic residues: residues 21–53, 76–88, and 97–137; these read EYYD…DDEN, IDPD…DTDG, and EMGE…DIED. Polar residues predominate over residues 290–312; it reads NQQKNSTTDTETLSTQENASTRV. 2 stretches are compositionally biased toward low complexity: residues 313–338 and 346–366; these read SGSN…SKSN and NSRT…SRTG. Positions 367–380 are enriched in basic residues; sequence SKSKKSSNTKSKSK. A compositionally biased stretch (acidic residues) spans 385–396; that stretch reads NSDDSDYSDYSE.

The protein belongs to the archaeal Rpo6/eukaryotic RPB6 RNA polymerase subunit family.

The catalysed reaction is RNA(n) + a ribonucleoside 5'-triphosphate = RNA(n+1) + diphosphate. In terms of biological role, DNA-dependent RNA polymerase catalyzes the transcription of DNA into RNA using the four ribonucleoside triphosphates as substrates. In Acanthamoeba polyphaga (Amoeba), this protein is DNA-directed RNA polymerase subunit 6.